The chain runs to 702 residues: Protein crooked neck (702 aa).

HAT repeat units lie at residues 56-88, 90-122, 124-156, 158-189, 191-222, 224-259, 261-295, 305-337, 339-373, 383-419, 454-486, 488-522, and 524-555; these read DYQQRKRKTFEDNLRKNRMVVSHWIKYAQWEEQ, QEIQRARSIWERALDNEHRNVTLWLKYAEMEMK, KQVNHARNLWDRAVTIMPRVNQFWYKYTYMEEM, ENVAGARQVFERWMEWQPEEQAWQTYVNFELR, KEIDRAREIYERFVYVHPDVKNWIKFARFEES, GFIHGSRRVFERAVEFFGDDYIEERLFIAFARFEEG, KEHDRARIIYKYALDHLPKDRTQELFKAYTKHEKK, VIVSKRKYQYEQEVAANPTNYDAWFDYLRLIEA, GDRDQIRETYERAISNVPPANEKNFWRRYIYLWIN, EDAERTRQIYKTCLELIPHKQFTFSKLWLLYAQFEIR, REFERCRMLYEKFLEFGPENCVTWMKFAELENL, GDTDRARAIFELAVQQPRLDMPELLWKAYIDFEVA, and GETELARQLYERLLERTQHVKVWMSFAKFEMG. The Nuclear localization signal signature appears at 620 to 628; sequence PRRIKKRQK. Positions 670–702 are disordered; sequence KDNTVDDPPATAIASEPEPAADAAPADTTDSGD. Residues 683–702 are compositionally biased toward low complexity; the sequence is ASEPEPAADAAPADTTDSGD.

The protein belongs to the crooked-neck family. In terms of assembly, colocalizes with a complex containing snRNP proteins. Transcribed in all cells during embryonic development.

It is found in the nucleus speckle. In terms of biological role, may be involved in pre-mRNA splicing process. Involved in embryonic neurogenesis and cell rearrangement during Malpighian tubule morphogenesis. In Drosophila melanogaster (Fruit fly), this protein is Protein crooked neck (crn).